A 303-amino-acid chain; its full sequence is ATP phosphoribosyltransferase (303 aa).

The protein belongs to the ATP phosphoribosyltransferase family. Long subfamily. Mg(2+) serves as cofactor.

It is found in the cytoplasm. The catalysed reaction is 1-(5-phospho-beta-D-ribosyl)-ATP + diphosphate = 5-phospho-alpha-D-ribose 1-diphosphate + ATP. It functions in the pathway amino-acid biosynthesis; L-histidine biosynthesis; L-histidine from 5-phospho-alpha-D-ribose 1-diphosphate: step 1/9. Feedback inhibited by histidine. Catalyzes the condensation of ATP and 5-phosphoribose 1-diphosphate to form N'-(5'-phosphoribosyl)-ATP (PR-ATP). Has a crucial role in the pathway because the rate of histidine biosynthesis seems to be controlled primarily by regulation of HisG enzymatic activity. The polypeptide is ATP phosphoribosyltransferase (Haemophilus influenzae (strain 86-028NP)).